The primary structure comprises 303 residues: N-acetyl-D-glucosamine kinase (303 aa).

Residues 4-11 and 133-140 contribute to the ATP site; these read GFDMGGTK and GVGGGLIV. His-157, Cys-177, Cys-179, and Cys-184 together coordinate Zn(2+).

This sequence belongs to the ROK (NagC/XylR) family. NagK subfamily.

It carries out the reaction N-acetyl-D-glucosamine + ATP = N-acetyl-D-glucosamine 6-phosphate + ADP + H(+). It functions in the pathway cell wall biogenesis; peptidoglycan recycling. Catalyzes the phosphorylation of N-acetyl-D-glucosamine (GlcNAc) derived from cell-wall degradation, yielding GlcNAc-6-P. The sequence is that of N-acetyl-D-glucosamine kinase from Yersinia enterocolitica serotype O:8 / biotype 1B (strain NCTC 13174 / 8081).